The primary structure comprises 239 residues: tRNA (guanine-N(1)-)-methyltransferase (239 aa).

S-adenosyl-L-methionine contacts are provided by residues Gly108 and 127–132 (LGDYVL).

The protein belongs to the RNA methyltransferase TrmD family. Homodimer.

The protein resides in the cytoplasm. The enzyme catalyses guanosine(37) in tRNA + S-adenosyl-L-methionine = N(1)-methylguanosine(37) in tRNA + S-adenosyl-L-homocysteine + H(+). Its function is as follows. Specifically methylates guanosine-37 in various tRNAs. This chain is tRNA (guanine-N(1)-)-methyltransferase, found in Streptococcus pneumoniae serotype 2 (strain D39 / NCTC 7466).